Reading from the N-terminus, the 347-residue chain is tRNA dimethylallyltransferase (347 aa).

Residue 20–27 participates in ATP binding; it reads GPTASGKT. 22–27 contacts substrate; that stretch reads TASGKT. Interaction with substrate tRNA stretches follow at residues 45-48, 169-173, and 275-280; these read DSAM, QRLMR, and RCVGYR.

Belongs to the IPP transferase family. In terms of assembly, monomer. Requires Mg(2+) as cofactor.

The catalysed reaction is adenosine(37) in tRNA + dimethylallyl diphosphate = N(6)-dimethylallyladenosine(37) in tRNA + diphosphate. Functionally, catalyzes the transfer of a dimethylallyl group onto the adenine at position 37 in tRNAs that read codons beginning with uridine, leading to the formation of N6-(dimethylallyl)adenosine (i(6)A). The chain is tRNA dimethylallyltransferase from Marinobacter nauticus (strain ATCC 700491 / DSM 11845 / VT8) (Marinobacter aquaeolei).